The following is a 397-amino-acid chain: Zinc finger transcription factor family protein 30 (397 aa).

The disordered stretch occupies residues 1-40 (MKLEDDKIHSPTNTEEEGYGSDVEVENGTDISGSKGGSGV). Positions 14-27 (TEEEGYGSDVEVEN) are enriched in acidic residues. C2H2-type zinc fingers lie at residues 51 to 74 (FRCS…MQAH), 78 to 102 (YKCT…KQHH), and 107 to 125 (YMCR…LHIH).

The protein localises to the nucleus. This Caenorhabditis elegans protein is Zinc finger transcription factor family protein 30 (ztf-30).